A 102-amino-acid chain; its full sequence is Large ribosomal subunit protein bL21 (102 aa).

It belongs to the bacterial ribosomal protein bL21 family. Part of the 50S ribosomal subunit. Contacts protein L20.

This protein binds to 23S rRNA in the presence of protein L20. The chain is Large ribosomal subunit protein bL21 from Listeria innocua serovar 6a (strain ATCC BAA-680 / CLIP 11262).